A 481-amino-acid polypeptide reads, in one-letter code: Autolysin (481 aa).

Residues 7 to 142 (KNEFIERLKT…LQDDNMLMIS (136 aa)) form the Peptidase C51 domain. The N-acetylmuramoyl-L-alanine amidase domain maps to 198 to 323 (SNPKGIVIHN…NEFTSTSCPH (126 aa)). An SH3b domain is found at 398–466 (EESARFTNGN…YLPIRTWNGS (69 aa)).

The protein belongs to the N-acetylmuramoyl-L-alanine amidase 2 family.

It is found in the secreted. The catalysed reaction is Hydrolyzes the link between N-acetylmuramoyl residues and L-amino acid residues in certain cell-wall glycopeptides.. Autolysins are involved in some important biological processes such as cell separation, cell-wall turnover, competence for genetic transformation, formation of the flagella and sporulation. Autolysin strictly depends on the presence of choline-containing cell walls for activity. The polypeptide is Autolysin (lytA) (Staphylococcus aureus).